The sequence spans 364 residues: Uroporphyrinogen decarboxylase (364 aa).

Residues 28–32, Phe47, Asp78, Tyr158, Thr213, and His334 contribute to the substrate site; that span reads RQAGR.

This sequence belongs to the uroporphyrinogen decarboxylase family. In terms of assembly, homodimer.

Its subcellular location is the cytoplasm. It catalyses the reaction uroporphyrinogen III + 4 H(+) = coproporphyrinogen III + 4 CO2. It participates in porphyrin-containing compound metabolism; protoporphyrin-IX biosynthesis; coproporphyrinogen-III from 5-aminolevulinate: step 4/4. Its function is as follows. Catalyzes the decarboxylation of four acetate groups of uroporphyrinogen-III to yield coproporphyrinogen-III. The sequence is that of Uroporphyrinogen decarboxylase from Ralstonia nicotianae (strain ATCC BAA-1114 / GMI1000) (Ralstonia solanacearum).